A 205-amino-acid polypeptide reads, in one-letter code: Ribosomal RNA small subunit methyltransferase G (205 aa).

Residues glycine 76, leucine 81, 127-128 (IE), and arginine 140 each bind S-adenosyl-L-methionine.

The protein belongs to the methyltransferase superfamily. RNA methyltransferase RsmG family.

It localises to the cytoplasm. It catalyses the reaction guanosine(527) in 16S rRNA + S-adenosyl-L-methionine = N(7)-methylguanosine(527) in 16S rRNA + S-adenosyl-L-homocysteine. Specifically methylates the N7 position of guanine in position 527 of 16S rRNA. This Francisella tularensis subsp. holarctica (strain FTNF002-00 / FTA) protein is Ribosomal RNA small subunit methyltransferase G.